Consider the following 178-residue polypeptide: Imidazoleglycerol-phosphate dehydratase (178 aa).

This sequence belongs to the imidazoleglycerol-phosphate dehydratase family.

It localises to the cytoplasm. The catalysed reaction is D-erythro-1-(imidazol-4-yl)glycerol 3-phosphate = 3-(imidazol-4-yl)-2-oxopropyl phosphate + H2O. Its pathway is amino-acid biosynthesis; L-histidine biosynthesis; L-histidine from 5-phospho-alpha-D-ribose 1-diphosphate: step 6/9. In Archaeoglobus fulgidus (strain ATCC 49558 / DSM 4304 / JCM 9628 / NBRC 100126 / VC-16), this protein is Imidazoleglycerol-phosphate dehydratase.